A 93-amino-acid chain; its full sequence is Exodeoxyribonuclease 7 small subunit (93 aa).

Positions 1–17 (MAKSSASSLSSAKPVAA) are enriched in low complexity. Residues 1–22 (MAKSSASSLSSAKPVAAGPDAS) are disordered.

It belongs to the XseB family. As to quaternary structure, heterooligomer composed of large and small subunits.

The protein resides in the cytoplasm. The enzyme catalyses Exonucleolytic cleavage in either 5'- to 3'- or 3'- to 5'-direction to yield nucleoside 5'-phosphates.. Bidirectionally degrades single-stranded DNA into large acid-insoluble oligonucleotides, which are then degraded further into small acid-soluble oligonucleotides. This is Exodeoxyribonuclease 7 small subunit from Polaromonas naphthalenivorans (strain CJ2).